A 342-amino-acid chain; its full sequence is Ribosomal RNA small subunit methyltransferase C (342 aa).

It belongs to the methyltransferase superfamily. RsmC family. As to quaternary structure, monomer.

Its subcellular location is the cytoplasm. It carries out the reaction guanosine(1207) in 16S rRNA + S-adenosyl-L-methionine = N(2)-methylguanosine(1207) in 16S rRNA + S-adenosyl-L-homocysteine + H(+). Functionally, specifically methylates the guanine in position 1207 of 16S rRNA in the 30S particle. This is Ribosomal RNA small subunit methyltransferase C from Shewanella sp. (strain MR-7).